We begin with the raw amino-acid sequence, 349 residues long: DNA fragmentation factor subunit beta (349 aa).

Positions 7-83 (QPKCVKLRAL…LLTAGETWHG (77 aa)) constitute a CIDE-N domain. Residues 319–349 (RSRIYRPQTGSRRKQPPRKQPPRKRPPRKRQ) form a disordered region. Residues 329 to 349 (SRRKQPPRKQPPRKRPPRKRQ) are compositionally biased toward basic residues.

Heterodimer of DFFA and DFFB. Interacts with H1-1.

The protein localises to the cytoplasm. Its subcellular location is the nucleus. Inhibited by DFFA (DFF45). Functionally, nuclease that induces DNA fragmentation and chromatin condensation during apoptosis. Degrades naked DNA and induces apoptotic morphology. This is DNA fragmentation factor subunit beta (Dffb) from Rattus norvegicus (Rat).